Here is a 286-residue protein sequence, read N- to C-terminus: Aspartate-semialdehyde dehydrogenase (286 aa).

NADP(+) contacts are provided by residues 10–13 (RGMV), 37–38 (TS), and Q74. Residue R103 participates in phosphate binding. C136 serves as the catalytic Acyl-thioester intermediate. Q163 is a binding site for substrate. NADP(+) is bound by residues 166-167 (SG) and P194. Residue E242 participates in substrate binding. K245 contributes to the phosphate binding site. R269 is a substrate binding site. H276 acts as the Proton acceptor in catalysis.

It belongs to the aspartate-semialdehyde dehydrogenase family. Homodimer.

It carries out the reaction L-aspartate 4-semialdehyde + phosphate + NADP(+) = 4-phospho-L-aspartate + NADPH + H(+). The protein operates within amino-acid biosynthesis; L-lysine biosynthesis via DAP pathway; (S)-tetrahydrodipicolinate from L-aspartate: step 2/4. It participates in amino-acid biosynthesis; L-methionine biosynthesis via de novo pathway; L-homoserine from L-aspartate: step 2/3. It functions in the pathway amino-acid biosynthesis; L-threonine biosynthesis; L-threonine from L-aspartate: step 2/5. Functionally, catalyzes the NADPH-dependent formation of L-aspartate-semialdehyde (L-ASA) by the reductive dephosphorylation of L-aspartyl-4-phosphate. The polypeptide is Aspartate-semialdehyde dehydrogenase (asd) (Actinobacillus pleuropneumoniae (Haemophilus pleuropneumoniae)).